The following is a 355-amino-acid chain: Butyrate kinase 1 (355 aa).

It belongs to the acetokinase family.

The protein localises to the cytoplasm. It catalyses the reaction butanoate + ATP = butanoyl phosphate + ADP. It functions in the pathway lipid metabolism; butanoate metabolism. Functionally, catalyzes the conversion of butyryl-CoA through butyryl phosphate to butyrate. The sequence is that of Butyrate kinase 1 (buk1) from Clostridium acetobutylicum (strain ATCC 824 / DSM 792 / JCM 1419 / IAM 19013 / LMG 5710 / NBRC 13948 / NRRL B-527 / VKM B-1787 / 2291 / W).